We begin with the raw amino-acid sequence, 538 residues long: Probable folate-biopterin transporter 9, chloroplastic (538 aa).

The transit peptide at 1 to 57 (MNNPLLSISNPVKFFKPPIPYRISLNTTINKKQKHQSKTLVVKSNKRSTTSLTSSVS) directs the protein to the chloroplast. 12 helical membrane-spanning segments follow: residues 85 to 105 (VLLC…WLAL), 129 to 149 (LPMV…IGGA), 152 to 172 (VPYI…LAIF), 178 to 198 (VLPS…ITEV), 220 to 240 (ALMA…YCLL), 246 to 266 (ILFL…LSSK), 309 to 329 (LIWI…VFCY), 339 to 359 (SVIG…TVVY), 370 to 390 (ALIH…YILV), 395 to 415 (LAFG…AEIL), 447 to 467 (LCLS…MIGI), and 479 to 499 (ILIQ…VPML).

It belongs to the major facilitator superfamily. Folate-biopterin transporter (TC 2.A.71) family.

The protein localises to the plastid. The protein resides in the chloroplast membrane. Functionally, could mediate folate transport. This is Probable folate-biopterin transporter 9, chloroplastic from Arabidopsis thaliana (Mouse-ear cress).